Reading from the N-terminus, the 20-residue chain is Protein PR-L2 (20 aa).

The segment at 1-20 (SVFAFENEQSSTIAPARLYK) is disordered.

Belongs to the BetVI family.

The protein is Protein PR-L2 of Lupinus luteus (European yellow lupine).